The primary structure comprises 196 residues: Shikimate kinase (196 aa).

Residue glycine 32–alanine 37 coordinates ATP. Serine 36 contacts Mg(2+). Substrate contacts are provided by aspartate 54, arginine 78, and glycine 100. Position 138 (arginine 138) interacts with ATP. Arginine 157 serves as a coordination point for substrate. Arginine 174 provides a ligand contact to ATP.

The protein belongs to the shikimate kinase family. Monomer. It depends on Mg(2+) as a cofactor.

It is found in the cytoplasm. It catalyses the reaction shikimate + ATP = 3-phosphoshikimate + ADP + H(+). It functions in the pathway metabolic intermediate biosynthesis; chorismate biosynthesis; chorismate from D-erythrose 4-phosphate and phosphoenolpyruvate: step 5/7. Catalyzes the specific phosphorylation of the 3-hydroxyl group of shikimic acid using ATP as a cosubstrate. This is Shikimate kinase from Rhizobium leguminosarum bv. trifolii (strain WSM2304).